A 293-amino-acid polypeptide reads, in one-letter code: UDP-3-O-acyl-N-acetylglucosamine deacetylase (293 aa).

The Zn(2+) site is built by H79, H236, and D240. Residue H263 is the Proton donor of the active site.

Belongs to the LpxC family. Zn(2+) serves as cofactor.

The enzyme catalyses a UDP-3-O-[(3R)-3-hydroxyacyl]-N-acetyl-alpha-D-glucosamine + H2O = a UDP-3-O-[(3R)-3-hydroxyacyl]-alpha-D-glucosamine + acetate. Its pathway is glycolipid biosynthesis; lipid IV(A) biosynthesis; lipid IV(A) from (3R)-3-hydroxytetradecanoyl-[acyl-carrier-protein] and UDP-N-acetyl-alpha-D-glucosamine: step 2/6. Its function is as follows. Catalyzes the hydrolysis of UDP-3-O-myristoyl-N-acetylglucosamine to form UDP-3-O-myristoylglucosamine and acetate, the committed step in lipid A biosynthesis. The chain is UDP-3-O-acyl-N-acetylglucosamine deacetylase from Phenylobacterium zucineum (strain HLK1).